A 118-amino-acid polypeptide reads, in one-letter code: Large ribosomal subunit protein uL24c (118 aa).

This sequence belongs to the universal ribosomal protein uL24 family. As to quaternary structure, part of the 50S ribosomal subunit.

Its subcellular location is the plastid. It is found in the organellar chromatophore. Its function is as follows. One of two assembly initiator proteins, it binds directly to the 5'-end of the 23S rRNA, where it nucleates assembly of the 50S subunit. The chain is Large ribosomal subunit protein uL24c (rpl24) from Paulinella chromatophora.